The primary structure comprises 501 residues: Glucan endo-1,3-beta-glucosidase 3 (501 aa).

Positions 1–18 (MAALLLLFLFLFASSALS) are cleaved as a signal peptide. N-linked (GlcNAc...) asparagine glycosylation is found at N88 and N107. E116 acts as the Proton donor in catalysis. 2 N-linked (GlcNAc...) asparagine glycosylation sites follow: N171 and N253. The Nucleophile role is filled by E263. Residues N295, N353, and N357 are each glycosylated (N-linked (GlcNAc...) asparagine). A disulfide bridge links C361 with C424. 4 N-linked (GlcNAc...) asparagine glycosylation sites follow: N451, N456, N457, and N466. S470 carries the GPI-anchor amidated serine lipid modification. A propeptide spans 471-501 (GCIPKYYHHPHASFGDLTLLSLLLIIALVFL) (removed in mature form).

The protein belongs to the glycosyl hydrolase 17 family. In terms of processing, contains two additional disulfide bonds.

It is found in the cell membrane. The catalysed reaction is Hydrolysis of (1-&gt;3)-beta-D-glucosidic linkages in (1-&gt;3)-beta-D-glucans.. In Arabidopsis thaliana (Mouse-ear cress), this protein is Glucan endo-1,3-beta-glucosidase 3.